The primary structure comprises 111 residues: Probable 4-amino-4-deoxy-L-arabinose-phosphoundecaprenol flippase subunit ArnE (111 aa).

Transmembrane regions (helical) follow at residues 38–58 (LWLG…LLVL), 61–81 (LPVG…TLAA), and 91–111 (PRHW…GSAA). Residues 40–109 (LGLALICMGA…IISGIIILGS (70 aa)) enclose the EamA domain.

The protein belongs to the ArnE family. As to quaternary structure, heterodimer of ArnE and ArnF.

The protein localises to the cell inner membrane. It functions in the pathway bacterial outer membrane biogenesis; lipopolysaccharide biosynthesis. In terms of biological role, translocates 4-amino-4-deoxy-L-arabinose-phosphoundecaprenol (alpha-L-Ara4N-phosphoundecaprenol) from the cytoplasmic to the periplasmic side of the inner membrane. This chain is Probable 4-amino-4-deoxy-L-arabinose-phosphoundecaprenol flippase subunit ArnE, found in Salmonella agona (strain SL483).